A 260-amino-acid polypeptide reads, in one-letter code: Acyl-coenzyme A diphosphatase FITM2 (260 aa).

The Cytoplasmic portion of the chain corresponds to 1-23 (MERLENCAQMFQRKFLNEAFRRH). Residues 24–44 (CPVLLACIALGGSLLKELSPL) traverse the membrane as a helical segment. Over 45-57 (PDSYWNNKRNVLN) the chain is Lumenal. A helical transmembrane segment spans residues 58-78 (VYFVKFCWGWTLWLLLPFITL). Over 79–93 (TNYKLTGSITKVLRR) the chain is Cytoplasmic. The helical transmembrane segment at 94–114 (LSSLLVGTLFWYLCTNLFLYI) threads the bilayer. The Lumenal portion of the chain corresponds to 115 to 144 (EHITGSCYESEALLDSIEHQDRKECRLHGG). The chain crosses the membrane as a helical span at residues 145 to 165 (FWHGFDISGHCFLLSYCILII). Residue H154 is part of the active site. The Cytoplasmic segment spans residues 166–189 (LEETSVIRSIQFERHWHRMAINAQ). 2 helical membrane passes run 190–210 (FTAL…TAVY) and 211–231 (FHNI…WYIT). The active site involves H212. The Cytoplasmic segment spans residues 232-260 (YRWWYLQPISPGLPPASASHSEKEPVYKN).

The protein belongs to the FIT family. FIT2 subfamily.

The protein resides in the endoplasmic reticulum membrane. It catalyses the reaction an acyl-CoA + H2O = an acyl-4'-phosphopantetheine + adenosine 3',5'-bisphosphate + 2 H(+). Functionally, fatty acyl-coenzyme A (CoA) diphosphatase that hydrolyzes fatty acyl-CoA to yield acyl-4'-phosphopantetheine and adenosine 3',5'-bisphosphate. Preferentially hydrolyzes unsaturated long-chain acyl-CoA substrates in the endoplasmic reticulum (ER) lumen. This catalytic activity is required for maintaining ER structure and for lipid droplets (LDs) biogenesis, which are lipid storage organelles involved in maintaining lipid and energy homeostasis. May directly bind to diacylglycerol (DAGs) and triacylglycerol, which is also important for LD biogenesis. May support directional budding of nacent LDs from the ER into the cytosol by reducing DAG levels at sites of LD formation. May play a role in the regulation of cell morphology, ER morphology and cytoskeletal organization. The polypeptide is Acyl-coenzyme A diphosphatase FITM2 (Xenopus laevis (African clawed frog)).